The sequence spans 440 residues: Chromosomal replication initiator protein DnaA (440 aa).

The segment at 1–74 (MNPSQILENL…VQSGNKAIIN (74 aa)) is domain I, interacts with DnaA modulators. Residues 74–99 (NIQAQSAKQSNKSTKIDIAHIKAQST) form a domain II region. The segment at 100–316 (ILNPSFTFDS…GIIISLNAYA (217 aa)) is domain III, AAA+ region. Residues glycine 146, glycine 148, lysine 149, and threonine 150 each contribute to the ATP site. A domain IV, binds dsDNA region spans residues 317–440 (TILGQEITLE…KNKILVKSQS (124 aa)).

Belongs to the DnaA family. Oligomerizes as a right-handed, spiral filament on DNA at oriC.

Its subcellular location is the cytoplasm. Its function is as follows. Plays an essential role in the initiation and regulation of chromosomal replication. ATP-DnaA binds to the origin of replication (oriC) to initiate formation of the DNA replication initiation complex once per cell cycle. Binds the DnaA box (a 9 base pair repeat at the origin) and separates the double-stranded (ds)DNA. Forms a right-handed helical filament on oriC DNA; dsDNA binds to the exterior of the filament while single-stranded (ss)DNA is stabiized in the filament's interior. The ATP-DnaA-oriC complex binds and stabilizes one strand of the AT-rich DNA unwinding element (DUE), permitting loading of DNA polymerase. After initiation quickly degrades to an ADP-DnaA complex that is not apt for DNA replication. Binds acidic phospholipids. The polypeptide is Chromosomal replication initiator protein DnaA (Campylobacter jejuni (strain RM1221)).